We begin with the raw amino-acid sequence, 200 residues long: dTTP/UTP pyrophosphatase (200 aa).

The active-site Proton acceptor is the Asp81.

This sequence belongs to the Maf family. YhdE subfamily. Requires a divalent metal cation as cofactor.

The protein localises to the cytoplasm. The catalysed reaction is dTTP + H2O = dTMP + diphosphate + H(+). The enzyme catalyses UTP + H2O = UMP + diphosphate + H(+). Nucleoside triphosphate pyrophosphatase that hydrolyzes dTTP and UTP. May have a dual role in cell division arrest and in preventing the incorporation of modified nucleotides into cellular nucleic acids. This Cupriavidus metallidurans (strain ATCC 43123 / DSM 2839 / NBRC 102507 / CH34) (Ralstonia metallidurans) protein is dTTP/UTP pyrophosphatase.